Reading from the N-terminus, the 190-residue chain is Protein LZIC (190 aa).

Residues Ala2 to Ile63 are a coiled coil.

The protein belongs to the CTNNBIP1 family. As to quaternary structure, does not interact with CTNNB1.

This chain is Protein LZIC (Lzic), found in Rattus norvegicus (Rat).